Here is a 292-residue protein sequence, read N- to C-terminus: uncharacterized protein (292 aa).

This is an uncharacterized protein from Acanthamoeba polyphaga (Amoeba).